Here is a 776-residue protein sequence, read N- to C-terminus: MASLIYRQLLTNSYTVNLSDEIQEIGSAKSKNVTINPGPFAQTGYAPVNWGAGETNDSTTVEPLLDGPYRPTTFNPPTSYWVLLAPTVEGVVIQGTNNIDRWLATILIEPNVQTTNRIYNLFGQQVTLSVENTSQTQWKFIDVSKTTPTGSYTQHGPLFSTPKLYAVMKFSGRIYTYNGTTPNATTGYYSTTNYDTVNMTLFCDFYIIPRNQEEKCTEYINHGLPPIQNTRNVVPVSLSAREVVHTRAQVNEDIVVSKTSLWKEMQYNRDITIRFKFDRTIIKAGGLGYKWSEISFKPITYQYTYTRDGEQITAHTTCSVNGVNNFSYNGGSLPTDFAISRYEVIKENSFVYIDYWDDSQAFRNMVYVRSLAANLNTVTCTGGSYTFALPLGNYPVMTGGTVSLHPAGVTLSTQFTDFVSLNSLRFRFRLTVGEPSFSITRTRVSRLYGLPAANPNNQREYYEISGRFSLISLVPSNDDYQTPIMNSVTVRQDLERQLGELRDEFNSLSQQIAMSQLIDLALLPLDMFSMFSGIKSTIDAAKSMATNVMKRFKRSNLASSVSTLTDAMSDAASSVSRSSSIRSIGSSVSAWTEVSTSITDISTTVDTVSTQTATIAKRLRLKEIATQTDGMNFDDISAAVLKTKIDKSVQITPNTLPDIVTEASEKFIPNRTYRVINNDEVFEAGMDGKFFAYRVDTFDEIPFDVQKFADLVTDSPVISAIIDLKTLKNLKDNYGISKQQAFDLLRSDPKVLREFINQNNPIIRNRIENLIMQCRL.

Residues 65–224 (LDGPYRPTTF…KCTEYINHGL (160 aa)) are spike head. The cysteines at positions 203 and 216 are disulfide-linked. Residues 248 to 479 (AQVNEDIVVS…LISLVPSNDD (232 aa)) are spike body and stalk (antigen domain). Residues 308-310 (DGE) are DGE motif. The DGE motif; interaction with ITGA2/ITGB1 heterodimer motif lies at 308–310 (DGE). Cys318 and Cys380 form a disulfide bridge. The hydrophobic; possible role in virus entry into host cell stretch occupies residues 389 to 409 (LPLGNYPVMTGGTVSLHPAGV). Residues 448–450 (YGL) carry the YGL motif; interaction with ITGA4 motif. Residues 484 to 518 (IMNSVTVRQDLERQLGELRDEFNSLSQQIAMSQLI) adopt a coiled-coil conformation. The segment at 510–776 (QQIAMSQLID…IENLIMQCRL (267 aa)) is spike foot. Residues 644-646 (KID) carry the KID motif; interaction with HSPA8 motif.

The protein belongs to the rotavirus VP4 family. As to quaternary structure, homotrimer. VP4 adopts a dimeric appearance above the capsid surface, while forming a trimeric base anchored inside the capsid layer. Only hints of the third molecule are observed above the capsid surface. It probably performs a series of molecular rearrangements during viral entry. Prior to trypsin cleavage, it is flexible. The priming trypsin cleavage triggers its rearrangement into rigid spikes with approximate two-fold symmetry of their protruding parts. After an unknown second triggering event, cleaved VP4 may undergo another rearrangement, in which two VP5* subunits fold back on themselves and join a third subunit to form a tightly associated trimer, shaped like a folded umbrella. Interacts with VP6. Interacts with VP7. In terms of assembly, homotrimer. The trimer is coiled-coil stabilized by its C-terminus, however, its N-terminus, known as antigen domain or 'body', seems to be flexible allowing it to self-associate either as a dimer or a trimer. Post-translationally, proteolytic cleavage by trypsin results in activation of VP4 functions and greatly increases infectivity. The penetration into the host cell is dependent on trypsin treatment of VP4. It produces two peptides, VP5* and VP8* that remain associated with the virion. Cleavage of VP4 by trypsin probably occurs in vivo in the lumen of the intestine prior to infection of enterocytes. Trypsin seems to be incorporated into the three-layered viral particles but remains inactive as long as the viral outer capsid is intact and would only be activated upon the solubilization of the latter.

It localises to the virion. Its subcellular location is the host rough endoplasmic reticulum. The protein resides in the host cell membrane. It is found in the host cytoplasm. The protein localises to the host cytoskeleton. It localises to the host endoplasmic reticulum-Golgi intermediate compartment. Its function is as follows. Spike-forming protein that mediates virion attachment to the host epithelial cell receptors and plays a major role in cell penetration, determination of host range restriction and virulence. Rotavirus attachment and entry into the host cell probably involves multiple sequential contacts between the outer capsid proteins VP4 and VP7, and the cell receptors. It is subsequently lost, together with VP7, following virus entry into the host cell. Following entry into the host cell, low intracellular or intravesicular Ca(2+) concentration probably causes the calcium-stabilized VP7 trimers to dissociate from the virion. This step is probably necessary for the membrane-disrupting entry step and the release of VP4, which is locked onto the virion by VP7. During the virus exit from the host cell, VP4 seems to be required to target the newly formed virions to the host cell lipid rafts. In terms of biological role, forms the spike 'foot' and 'body' and acts as a membrane permeabilization protein that mediates release of viral particles from endosomal compartments into the cytoplasm. During entry, the part of VP5* that protrudes from the virus folds back on itself and reorganizes from a local dimer to a trimer. This reorganization may be linked to membrane penetration by exposing VP5* hydrophobic region. In integrin-dependent strains, VP5* targets the integrin heterodimer ITGA2/ITGB1 for cell attachment. Functionally, forms the head of the spikes and mediates the recognition of specific host cell surface glycans. It is the viral hemagglutinin and an important target of neutralizing antibodies. In sialic acid-dependent strains, VP8* binds to host cell sialic acid, most probably a ganglioside, providing the initial contact. In some other strains, VP8* mediates the attachment to histo-blood group antigens (HBGAs) for viral entry. The sequence is that of Outer capsid protein VP4 from Rotavirus A (isolate RVA/Pig/Australia/CRW-8/1987/G3P9[7]) (RV-A).